The following is a 91-amino-acid chain: UPF0250 protein mma_3250 (91 aa).

The protein belongs to the UPF0250 family.

The chain is UPF0250 protein mma_3250 from Janthinobacterium sp. (strain Marseille) (Minibacterium massiliensis).